The chain runs to 190 residues: Cilia- and flagella-associated protein 20 (190 aa).

The protein belongs to the CFAP20 family.

The protein resides in the cytoplasm. Its subcellular location is the cytoskeleton. The protein localises to the flagellum axoneme. It localises to the flagellum basal body. Its function is as follows. Cilium- and flagellum-specific protein that plays a role in axonemal structure organization and motility. Involved in the control of flagellar beating in an asymmetric and planar waveform. Stabilizes outer doublet microtubules (DMTs) of the axoneme and may work as a scaffold for intratubular proteins, such as tektin and PACRG, to produce the beak structures in DMT1, 5 and 6. Not essential for flagellar assembly. The chain is Cilia- and flagella-associated protein 20 (CFAP20) from Chlamydomonas reinhardtii (Chlamydomonas smithii).